We begin with the raw amino-acid sequence, 259 residues long: Aliphatic sulfonates import ATP-binding protein SsuB 1 (259 aa).

The region spanning 15 to 229 is the ABC transporter domain; sequence VECRRITRRF…QASTPGFQAL (215 aa). An ATP-binding site is contributed by 47–54; it reads GSSGSGKT.

This sequence belongs to the ABC transporter superfamily. Aliphatic sulfonates importer (TC 3.A.1.17.2) family. In terms of assembly, the complex is composed of two ATP-binding proteins (SsuB), two transmembrane proteins (SsuC) and a solute-binding protein (SsuA).

It localises to the cell inner membrane. The catalysed reaction is ATP + H2O + aliphatic sulfonate-[sulfonate-binding protein]Side 1 = ADP + phosphate + aliphatic sulfonateSide 2 + [sulfonate-binding protein]Side 1.. Its function is as follows. Part of the ABC transporter complex SsuABC involved in aliphatic sulfonates import. Responsible for energy coupling to the transport system. In Pseudomonas fluorescens (strain ATCC BAA-477 / NRRL B-23932 / Pf-5), this protein is Aliphatic sulfonates import ATP-binding protein SsuB 1.